The following is a 103-amino-acid chain: Small ribosomal subunit protein uS10 (103 aa).

Belongs to the universal ribosomal protein uS10 family. Part of the 30S ribosomal subunit.

In terms of biological role, involved in the binding of tRNA to the ribosomes. The polypeptide is Small ribosomal subunit protein uS10 (Shewanella frigidimarina (strain NCIMB 400)).